Reading from the N-terminus, the 390-residue chain is MLSRKGIIPEEYVLTRLAEDPAKPRYRARQRRARFVSKKGNCNVAHKNIREQGRFLQDVFTTLVDLKWPHTLLIFTMSFLCSWLLFAMAWWLIAFAHGDLAPSEGTAEPCVTSIHSFSSAFLFSIEVQVTIGFGGRMVTEECPLAILILIVQNIVGLMINAIMLGCIFMKTAQAHRRAETLIFSKHAVIALRHGRLCFMLRVGDLRKSMIISATIHMQVVRKTTSPEGEVVPLHQVDIPMENGVGGNSIFLVAPLIIYHVIDANSPLYDLAPSDLHHHQDLEIIVILEGVVETTGITTQARTSYLADEILWGQRFVPIVAEEDGRYSVDYSKFGNTVKVPTPLCTARQLDEDHSLLEALTLASARGPLRKRSVPMAKAKPKFSISPDSLS.

Residues 1 to 65 (MLSRKGIIPE…LQDVFTTLVD (65 aa)) lie on the Cytoplasmic side of the membrane. Positions 48 and 50 each coordinate ATP. A helical membrane pass occupies residues 66–92 (LKWPHTLLIFTMSFLCSWLLFAMAWWL). Over 93 to 116 (IAFAHGDLAPSEGTAEPCVTSIHS) the chain is Extracellular. Cys-110 and Cys-142 are disulfide-bonded. The discontinuously helical; Pore-forming intramembrane region spans 117-133 (FSSAFLFSIEVQVTIGF). Residues Thr-130 and Phe-133 each coordinate K(+). A Selectivity filter motif is present at residues 130–135 (TIGFGG). The Extracellular portion of the chain corresponds to 134–142 (GGRMVTEEC). Residues 143–171 (PLAILILIVQNIVGLMINAIMLGCIFMKT) traverse the membrane as a helical segment. Residues 172-390 (AQAHRRAETL…KFSISPDSLS (219 aa)) lie on the Cytoplasmic side of the membrane. Arg-176 contacts a 1,2-diacyl-sn-glycero-3-phospho-(1D-myo-inositol-4,5-bisphosphate). ATP is bound at residue Tyr-330. At Thr-341 the chain carries Phosphothreonine; by MAPK1. Ser-385 is subject to Phosphoserine; by MAPK1.

It belongs to the inward rectifier-type potassium channel (TC 1.A.2.1) family. KCNJ11 subfamily. Homotetramer; the homotetramer binds four ATP molecules (one ATP per subunit). Forms an heterooctamer with ABCC8/SUR1; one KCNJ11 homotetramer interacts with four ABCC8/SUR1 molecules. Interacts with ABCC9/SUR2. Phosphorylation by MAPK1 results in changes in channel gating that destabilize the closed states and reduce the ATP sensitivity.

The protein localises to the membrane. The enzyme catalyses K(+)(in) = K(+)(out). Its activity is regulated as follows. KATP channels are regulated by cytoplasmic ATP/ADP ratios; ATP inhibits the channel by closing the pore, while ADP activates the channel. Activated by phosphatidylinositol 4,5-biphosphate (PtdIns(4,5)P2). Functionally, inward rectifier potassium channel that forms the pore of ATP-sensitive potassium channels (KATP), regulating potassium permeability as a function of cytoplasmic ATP and ADP concentrations in many different cells. Inward rectifier potassium channels are characterized by a greater tendency to allow potassium to flow into the cell rather than out of it. Their voltage dependence is regulated by the concentration of extracellular potassium; as external potassium is raised, the voltage range of the channel opening shifts to more positive voltages. The inward rectification is mainly due to the blockage of outward current by internal magnesium. Can be blocked by extracellular barium. In pancreatic cells, it forms KATP channels with ABCC8/SUR1. Can form cardiac and smooth muscle-type KATP channels with ABCC9. The chain is ATP-sensitive inward rectifier potassium channel 11 (KCNJ11) from Homo sapiens (Human).